Consider the following 187-residue polypeptide: Urease accessory protein UreE (187 aa).

The segment at 154-187 (RANSAQGHGHSHGHSHSHDHHGYHHHGDGNWHKH) is disordered. Residues 162–177 (GHSHGHSHSHDHHGYH) show a composition bias toward basic residues. Residues 178 to 187 (HHGDGNWHKH) are compositionally biased toward basic and acidic residues.

Belongs to the UreE family.

It localises to the cytoplasm. Involved in urease metallocenter assembly. Binds nickel. Probably functions as a nickel donor during metallocenter assembly. This Actinobacillus pleuropneumoniae (Haemophilus pleuropneumoniae) protein is Urease accessory protein UreE.